Reading from the N-terminus, the 141-residue chain is Nucleoside diphosphate kinase (141 aa).

The ATP site is built by Lys-11, Phe-59, Arg-87, Thr-93, Arg-104, and Asn-114. His-117 serves as the catalytic Pros-phosphohistidine intermediate.

The protein belongs to the NDK family. Homotetramer. Requires Mg(2+) as cofactor.

Its subcellular location is the cytoplasm. The enzyme catalyses a 2'-deoxyribonucleoside 5'-diphosphate + ATP = a 2'-deoxyribonucleoside 5'-triphosphate + ADP. It carries out the reaction a ribonucleoside 5'-diphosphate + ATP = a ribonucleoside 5'-triphosphate + ADP. Major role in the synthesis of nucleoside triphosphates other than ATP. The ATP gamma phosphate is transferred to the NDP beta phosphate via a ping-pong mechanism, using a phosphorylated active-site intermediate. The protein is Nucleoside diphosphate kinase of Burkholderia thailandensis (strain ATCC 700388 / DSM 13276 / CCUG 48851 / CIP 106301 / E264).